A 174-amino-acid polypeptide reads, in one-letter code: uncharacterized protein (174 aa).

It to E.coli HemX C-terminal region.

This is an uncharacterized protein from Haemophilus influenzae (strain ATCC 51907 / DSM 11121 / KW20 / Rd).